The following is a 77-amino-acid chain: Large ribosomal subunit protein bL28 (77 aa).

Residues 1 to 20 are disordered; that stretch reads MSRVCQVTGKGPVTGNNISH.

The protein belongs to the bacterial ribosomal protein bL28 family.

The chain is Large ribosomal subunit protein bL28 from Pseudomonas syringae pv. tomato (strain ATCC BAA-871 / DC3000).